A 244-amino-acid chain; its full sequence is Venom nerve growth factor 2 (244 aa).

The signal sequence occupies residues 1–18 (MSMLCYTLIIAFLIGIWA). Residues 19-125 (APKSEDNVPL…TLNRNIRAKR (107 aa)) constitute a propeptide that is removed on maturation. The segment covering 47 to 66 (GLKTSRNTDQRHPAPKKAED) has biased composition (basic and acidic residues). Residues 47 to 69 (GLKTSRNTDQRHPAPKKAEDQEL) are disordered. Intrachain disulfides connect cysteine 139-cysteine 205 and cysteine 181-cysteine 233.

It belongs to the NGF-beta family. Homodimer; non-covalently linked. In terms of tissue distribution, expressed by the venom gland.

The protein localises to the secreted. In terms of biological role, nerve growth factor is important for the development and maintenance of the sympathetic and sensory nervous systems. It stimulates division and differentiation of sympathetic and embryonic sensory neurons as well as basal forebrain cholinergic neurons in the brain. Its relevance in the snake venom is not clear. However, it has been shown to inhibit metalloproteinase-dependent proteolysis of platelet glycoprotein Ib alpha, suggesting a metalloproteinase inhibition to prevent metalloprotease autodigestion and/or protection against prey proteases. Binds a lipid between the two protein chains in the homodimer. The lipid-bound form promotes histamine relase from mouse mast cells, contrary to the lipid-free form. This Notechis scutatus scutatus (Mainland tiger snake) protein is Venom nerve growth factor 2.